The sequence spans 1241 residues: ATP-dependent helicase/nuclease subunit A (1241 aa).

The UvrD-like helicase ATP-binding domain maps to 12–485; sequence SQWTDDQWKA…IDLAKNFRSR (474 aa). An ATP-binding site is contributed by 33 to 40; that stretch reads AAAGSGKT. A UvrD-like helicase C-terminal domain is found at 505 to 805; sequence GEIDYDADAE…RIMTIHKSKG (301 aa).

This sequence belongs to the helicase family. AddA subfamily. Heterodimer of AddA and AddB/RexB. It depends on Mg(2+) as a cofactor.

The catalysed reaction is Couples ATP hydrolysis with the unwinding of duplex DNA by translocating in the 3'-5' direction.. It catalyses the reaction ATP + H2O = ADP + phosphate + H(+). Its function is as follows. The heterodimer acts as both an ATP-dependent DNA helicase and an ATP-dependent, dual-direction single-stranded exonuclease. Recognizes the chi site generating a DNA molecule suitable for the initiation of homologous recombination. The AddA nuclease domain is required for chi fragment generation; this subunit has the helicase and 3' -&gt; 5' nuclease activities. This is ATP-dependent helicase/nuclease subunit A from Bacillus cereus (strain B4264).